Reading from the N-terminus, the 276-residue chain is MASAELDYSIEIPDQPCWSQKNRQGGKEAGKQQPVVILLGWGGCRDKNLAKYSAIYHKRGCIVIRYTAPWHMVFFSESLGIPSLRVIAQKLLELLFDYEIEREPLLFHVFSNAGVMLYRYVLELLQTHQRFRHLHVVGTIFDSGPGDSNLIGALRALATILERRPAVLRLLLLAAFALVVILFHFLLAPFTALFHTHFYDRLQDSGSCWPELYLYSRADKVVSARDVERMVEARLAHQVMVRGVDFVSSAHVSHLRDYPTYYTSLCVDFMHNCVQC.

The chain crosses the membrane as a helical span at residues 170 to 190; it reads LLLLAAFALVVILFHFLLAPF.

It belongs to the TMEM53 family. In terms of tissue distribution, expressed in liver (at protein level).

It localises to the nucleus outer membrane. Functionally, negatively regulates bone morphogenetic protein (BMP) signaling in osteoblast lineage cells by blocking cytoplasm-nucleus translocation of phosphorylated SMAD1/5/9 proteins. This is Transmembrane protein 53 (Tmem53) from Mus musculus (Mouse).